The following is a 134-amino-acid chain: Large ribosomal subunit protein eL32 (134 aa).

The protein belongs to the eukaryotic ribosomal protein eL32 family.

This chain is Large ribosomal subunit protein eL32 (RpL32), found in Apis mellifera (Honeybee).